The following is a 314-amino-acid chain: MKVVAVGGGTGLSTLLKGLKNIDSFEITAVVSVTDEGGSSGKLRKELNVPPPGDVRNNIVALAKDEDLLAKLMSYRFSEGSFKGHSLGNLIIAALTKIEGSFSEAIRILERVLAIKGRVLPVSEDHARLVARFEDGEEVIGETNIVRKGGKIVEVRLDRPIDALPEVLEAIERADIIIFGPGSLYTSIITNVLVNGVKDAIKKSKAKKIYVCNLMTQPGETTGYRVSDHVKELERYLEQSVDFVLVNTRKPSEEVLERYRKEGSDFVEIDAENIQNTILAEPFLVEIVDPSDGQRKIRHDSVKLADVIERISRW.

It belongs to the gluconeogenesis factor family.

The protein resides in the cytoplasm. Required for morphogenesis under gluconeogenic growth conditions. The protein is Putative gluconeogenesis factor of Thermotoga maritima (strain ATCC 43589 / DSM 3109 / JCM 10099 / NBRC 100826 / MSB8).